We begin with the raw amino-acid sequence, 138 residues long: Acidic phospholipase A2 1 (138 aa).

Residues 1-16 form the signal peptide; the sequence is MRTLWIMAVLLVGVDG. 7 disulfides stabilise this stretch: cysteine 42–cysteine 131, cysteine 44–cysteine 60, cysteine 59–cysteine 110, cysteine 65–cysteine 138, cysteine 66–cysteine 103, cysteine 73–cysteine 97, and cysteine 91–cysteine 101. Tyrosine 43, glycine 45, and glycine 47 together coordinate Ca(2+). Residue histidine 63 is part of the active site. Aspartate 64 provides a ligand contact to Ca(2+). Aspartate 104 is an active-site residue.

It belongs to the phospholipase A2 family. Group II subfamily. D49 sub-subfamily. In terms of assembly, homodimer. Ca(2+) serves as cofactor. In terms of tissue distribution, expressed by the venom gland.

The protein resides in the secreted. It catalyses the reaction a 1,2-diacyl-sn-glycero-3-phosphocholine + H2O = a 1-acyl-sn-glycero-3-phosphocholine + a fatty acid + H(+). Its function is as follows. Snake venom phospholipase A2 (PLA2) that is highly lipolytic and myolytic. PLA2 catalyzes the calcium-dependent hydrolysis of the 2-acyl groups in 3-sn-phosphoglycerides. The sequence is that of Acidic phospholipase A2 1 from Protobothrops flavoviridis (Habu).